The sequence spans 417 residues: Serine hydroxymethyltransferase (417 aa).

Residues leucine 121 and 125-127 (GHL) contribute to the (6S)-5,6,7,8-tetrahydrofolate site. Lysine 229 is subject to N6-(pyridoxal phosphate)lysine. Residue 355–357 (SPF) coordinates (6S)-5,6,7,8-tetrahydrofolate.

This sequence belongs to the SHMT family. As to quaternary structure, homodimer. Requires pyridoxal 5'-phosphate as cofactor.

It is found in the cytoplasm. It catalyses the reaction (6R)-5,10-methylene-5,6,7,8-tetrahydrofolate + glycine + H2O = (6S)-5,6,7,8-tetrahydrofolate + L-serine. The protein operates within one-carbon metabolism; tetrahydrofolate interconversion. Its pathway is amino-acid biosynthesis; glycine biosynthesis; glycine from L-serine: step 1/1. In terms of biological role, catalyzes the reversible interconversion of serine and glycine with tetrahydrofolate (THF) serving as the one-carbon carrier. This reaction serves as the major source of one-carbon groups required for the biosynthesis of purines, thymidylate, methionine, and other important biomolecules. Also exhibits THF-independent aldolase activity toward beta-hydroxyamino acids, producing glycine and aldehydes, via a retro-aldol mechanism. This Buchnera aphidicola subsp. Acyrthosiphon pisum (strain 5A) protein is Serine hydroxymethyltransferase.